The following is a 385-amino-acid chain: Pre-mRNA-splicing factor slt-11 (385 aa).

Positions 157–233 are disordered; it reads RKGREVDEEG…PPGPKDWLPP (77 aa). The segment covering 171–187 has biased composition (low complexity); that stretch reads GSSSGAGRATGGNPAVG. In terms of domain architecture, RRM spans 239 to 312; it reads MSLFVTGIED…CPLRVRWSVP (74 aa). Positions 320–331 are enriched in basic and acidic residues; sequence KEQRSEMLRDGR. Positions 320–370 are disordered; sequence KEQRSEMLRDGRSAFGSGQKTGGQKAIGGQNAQGGASGAQKDDASNLTIAA.

The protein belongs to the SLT11 family. Associated with the spliceosome.

The protein localises to the nucleus. Its function is as follows. Involved in pre-mRNA splicing. Facilitates the cooperative formation of U2/U6 helix II in association with stem II in the spliceosome. Binds to RNA. The sequence is that of Pre-mRNA-splicing factor slt-11 (slt-11) from Neurospora crassa (strain ATCC 24698 / 74-OR23-1A / CBS 708.71 / DSM 1257 / FGSC 987).